Reading from the N-terminus, the 608-residue chain is DNA mismatch repair protein MutL (608 aa).

It belongs to the DNA mismatch repair MutL/HexB family.

In terms of biological role, this protein is involved in the repair of mismatches in DNA. It is required for dam-dependent methyl-directed DNA mismatch repair. May act as a 'molecular matchmaker', a protein that promotes the formation of a stable complex between two or more DNA-binding proteins in an ATP-dependent manner without itself being part of a final effector complex. In Elusimicrobium minutum (strain Pei191), this protein is DNA mismatch repair protein MutL.